Here is a 211-residue protein sequence, read N- to C-terminus: Pyridoxine/pyridoxamine 5'-phosphate oxidase (211 aa).

Substrate contacts are provided by residues 8–11 and Lys66; that span reads RRDY. FMN-binding positions include 61-66, 76-77, Arg82, Lys83, and Gln105; these read RLVLLK and FT. Residues Tyr123, Arg127, and Ser131 each contribute to the substrate site. Residues 140 to 141 and Trp184 each bind FMN; that span reads QS. Position 190-192 (190-192) interacts with substrate; the sequence is RLH. An FMN-binding site is contributed by Arg194.

The protein belongs to the pyridoxamine 5'-phosphate oxidase family. In terms of assembly, homodimer. FMN serves as cofactor.

It carries out the reaction pyridoxamine 5'-phosphate + O2 + H2O = pyridoxal 5'-phosphate + H2O2 + NH4(+). The enzyme catalyses pyridoxine 5'-phosphate + O2 = pyridoxal 5'-phosphate + H2O2. It participates in cofactor metabolism; pyridoxal 5'-phosphate salvage; pyridoxal 5'-phosphate from pyridoxamine 5'-phosphate: step 1/1. It functions in the pathway cofactor metabolism; pyridoxal 5'-phosphate salvage; pyridoxal 5'-phosphate from pyridoxine 5'-phosphate: step 1/1. Catalyzes the oxidation of either pyridoxine 5'-phosphate (PNP) or pyridoxamine 5'-phosphate (PMP) into pyridoxal 5'-phosphate (PLP). The protein is Pyridoxine/pyridoxamine 5'-phosphate oxidase of Thermosynechococcus vestitus (strain NIES-2133 / IAM M-273 / BP-1).